Reading from the N-terminus, the 445-residue chain is RNA pseudouridine synthase 2, chloroplastic (445 aa).

Residues 1–44 (MATTAAASPPAIATALSALLRRQRRRSSRCVGASHARCLAADAN) constitute a chloroplast transit peptide. Residues 47 to 66 (AVAPSRRGGHGGTRLEEAVP) form a disordered region. In terms of domain architecture, S4 RNA-binding spans 72-147 (SRIDAWISAR…IPLDIVYEDD (76 aa)). Asp235 is an active-site residue.

It belongs to the pseudouridine synthase RluA family.

Its subcellular location is the plastid. The protein localises to the chloroplast. It catalyses the reaction a uridine in RNA = a pseudouridine in RNA. In Oryza sativa subsp. japonica (Rice), this protein is RNA pseudouridine synthase 2, chloroplastic.